The chain runs to 180 residues: Interleukin-17B (180 aa).

An N-terminal signal peptide occupies residues 1 to 22; sequence MDWPHSLLFLLAISIFLAPSHP. Positions 22–44 are disordered; that stretch reads PRNTKGKRKGQGRPSPLAPGPHQ. Residues 23-32 show a composition bias toward basic residues; the sequence is RNTKGKRKGQ. N75 carries N-linked (GlcNAc...) asparagine glycosylation. 2 disulfide bridges follow: C121/C176 and C126/C178.

The protein belongs to the IL-17 family.

It localises to the secreted. Stimulates the release of tumor necrosis factor alpha and IL-1-beta from the monocytic cell line THP-1. This chain is Interleukin-17B (Il17b), found in Mus musculus (Mouse).